Here is a 964-residue protein sequence, read N- to C-terminus: Glycine dehydrogenase (decarboxylating) (964 aa).

Residues 1–11 (MNSTLQNQTKT) are compositionally biased toward polar residues. Positions 1 to 21 (MNSTLQNQTKTNLEKVGTDPL) are disordered. An N6-(pyridoxal phosphate)lysine modification is found at Lys-713.

The protein belongs to the GcvP family. The glycine cleavage system is composed of four proteins: P, T, L and H. Pyridoxal 5'-phosphate serves as cofactor.

It carries out the reaction N(6)-[(R)-lipoyl]-L-lysyl-[glycine-cleavage complex H protein] + glycine + H(+) = N(6)-[(R)-S(8)-aminomethyldihydrolipoyl]-L-lysyl-[glycine-cleavage complex H protein] + CO2. The glycine cleavage system catalyzes the degradation of glycine. The P protein binds the alpha-amino group of glycine through its pyridoxal phosphate cofactor; CO(2) is released and the remaining methylamine moiety is then transferred to the lipoamide cofactor of the H protein. The sequence is that of Glycine dehydrogenase (decarboxylating) from Leptospira interrogans serogroup Icterohaemorrhagiae serovar copenhageni (strain Fiocruz L1-130).